A 291-amino-acid chain; its full sequence is Undecaprenyl-diphosphatase (291 aa).

The next 8 membrane-spanning stretches (helical) occupy residues 1–21 (MLILELIKGIILGIVEGLTEF), 48–68 (SAFTFKIVIQLGSVFAGAWVF), 99–119 (LHIIVGMIPAGVLGLLFDDVI), 123–143 (LFSVPTVMIGLFIGAIYMIIA), 159–179 (INYFQAFVIGLSQAIAMWPGF), 200–220 (SDFTFIMAVPVMLAASGLSLV), 236–256 (LGFLAAFIVGLIAIKTFLYLI), and 269–289 (IVLVIIIAILYFGFGIGQGIT).

The protein belongs to the UppP family.

Its subcellular location is the cell membrane. The catalysed reaction is di-trans,octa-cis-undecaprenyl diphosphate + H2O = di-trans,octa-cis-undecaprenyl phosphate + phosphate + H(+). Catalyzes the dephosphorylation of undecaprenyl diphosphate (UPP). Confers resistance to bacitracin. This Staphylococcus saprophyticus subsp. saprophyticus (strain ATCC 15305 / DSM 20229 / NCIMB 8711 / NCTC 7292 / S-41) protein is Undecaprenyl-diphosphatase.